Here is a 327-residue protein sequence, read N- to C-terminus: Phenylalanine--tRNA ligase alpha subunit (327 aa).

Glu-252 is a Mg(2+) binding site.

Belongs to the class-II aminoacyl-tRNA synthetase family. Phe-tRNA synthetase alpha subunit type 1 subfamily. Tetramer of two alpha and two beta subunits. Mg(2+) serves as cofactor.

The protein resides in the cytoplasm. The catalysed reaction is tRNA(Phe) + L-phenylalanine + ATP = L-phenylalanyl-tRNA(Phe) + AMP + diphosphate + H(+). The chain is Phenylalanine--tRNA ligase alpha subunit from Proteus mirabilis (strain HI4320).